Here is a 193-residue protein sequence, read N- to C-terminus: Acyl carrier protein phosphodiesterase (193 aa).

The protein belongs to the AcpH family.

The enzyme catalyses holo-[ACP] + H2O = apo-[ACP] + (R)-4'-phosphopantetheine + H(+). Converts holo-ACP to apo-ACP by hydrolytic cleavage of the phosphopantetheine prosthetic group from ACP. The chain is Acyl carrier protein phosphodiesterase from Klebsiella pneumoniae subsp. pneumoniae (strain ATCC 700721 / MGH 78578).